The chain runs to 375 residues: Acetylornithine aminotransferase (375 aa).

Pyridoxal 5'-phosphate contacts are provided by residues 93 to 94 and Phe120; that span reads GT. Arg123 contacts N(2)-acetyl-L-ornithine. Residue 205–208 coordinates pyridoxal 5'-phosphate; that stretch reads DEVQ. Residue Lys234 is modified to N6-(pyridoxal phosphate)lysine. Thr262 lines the N(2)-acetyl-L-ornithine pocket. A pyridoxal 5'-phosphate-binding site is contributed by Thr263.

Belongs to the class-III pyridoxal-phosphate-dependent aminotransferase family. ArgD subfamily. Homodimer. Pyridoxal 5'-phosphate is required as a cofactor.

It localises to the cytoplasm. It catalyses the reaction N(2)-acetyl-L-ornithine + 2-oxoglutarate = N-acetyl-L-glutamate 5-semialdehyde + L-glutamate. Its pathway is amino-acid biosynthesis; L-arginine biosynthesis; N(2)-acetyl-L-ornithine from L-glutamate: step 4/4. The chain is Acetylornithine aminotransferase from Staphylococcus epidermidis (strain ATCC 35984 / DSM 28319 / BCRC 17069 / CCUG 31568 / BM 3577 / RP62A).